The following is a 590-amino-acid chain: Plasmepsin V (590 aa).

The Lumenal segment spans residues 1–544 (MNNYFLRKEN…EKENIFLKVS (544 aa)). Positions 33 to 81 (CNNVENKIDNVGKKIENVGKKIGDMENKNDNVENKNDNVGNKNDNVKNA) form a coiled coil. The region spanning 100–514 (YFLDIDIGKP…DLQQNQIAFI (415 aa)) is the Peptidase A1 domain. D118 is an active-site residue. Intrachain disulfides connect C128–C211, C131–C134, C155–C166, C160–C171, C259–C518, C389–C434, and C443–C479. Positions 282 to 291 (KEKQKMDKSD) are enriched in basic and acidic residues. The disordered stretch occupies residues 282–316 (KEKQKMDKSDNNSSNKGNVSIKLKNNDKNDDEENN). The segment covering 292–304 (NNSSNKGNVSIKL) has biased composition (low complexity). D365 is an active-site residue. A helical transmembrane segment spans residues 545–565 (YINLYCLWLLLALTILLSLIL). Residues 566–590 (YVRKMFYMDYFPLSDQNKSPIQEST) are Cytoplasmic-facing.

The protein belongs to the peptidase A1 family. As to quaternary structure, component of a complex composed of SPC25 and PMV; the interaction is mediated via the transmembrane domains. The complex interacts with the SEC61 channel-forming translocon complex and is involved in the recognition and import of PEXEL motif-containing proteins into the ER for subsequent export. In terms of processing, it is not clear if the zymogen has a cleavable propeptide. In vitro, appears to be cleaved between Asn-80 and Ala-81. Cleavage of the putative propeptide is dispensable for catalytic activity.

It localises to the endoplasmic reticulum membrane. With respect to regulation, inhibited by peptidomimetic inhibitor WEHI-842. Inhibited by Cu(2+) and Hg(2+). Its function is as follows. During the asexual blood stage, plays an essential role in the export of several proteins into the host erythrocytes by cleaving the pentameric localization motif RxLxE/Q/D (termed Plasmodium export element (PEXEL)) located downstream of the N-terminal secretory signal sequence. Specifically, cleaves after the leucine residue in the RxLxE/Q/D (or RxLxxE) motif of exported proteins including RESA, EMP2, EMP3, KAHRP, RIF/Rifin and STEVOR. Also, by regulating protein export, plays an essential role in gametocyte development and thus, parasite transmission to the mosquito vector. This is Plasmepsin V from Plasmodium falciparum (isolate 3D7).